The chain runs to 191 residues: Octanoyltransferase (191 aa).

The region spanning 10 to 185 (ENSHDEIWLV…NILALLNNPP (176 aa)) is the BPL/LPL catalytic domain. Residues 49–56 (RGGQVTYH), 116–118 (SLG), and 129–131 (GLA) contribute to the substrate site. The active-site Acyl-thioester intermediate is the Cys-147.

Belongs to the LipB family.

The protein resides in the cytoplasm. The catalysed reaction is octanoyl-[ACP] + L-lysyl-[protein] = N(6)-octanoyl-L-lysyl-[protein] + holo-[ACP] + H(+). It functions in the pathway protein modification; protein lipoylation via endogenous pathway; protein N(6)-(lipoyl)lysine from octanoyl-[acyl-carrier-protein]: step 1/2. In terms of biological role, catalyzes the transfer of endogenously produced octanoic acid from octanoyl-acyl-carrier-protein onto the lipoyl domains of lipoate-dependent enzymes. Lipoyl-ACP can also act as a substrate although octanoyl-ACP is likely to be the physiological substrate. This is Octanoyltransferase from Salmonella choleraesuis (strain SC-B67).